A 710-amino-acid polypeptide reads, in one-letter code: TRP-like ion channel pkd2 (710 aa).

Residues 1 to 23 (MRLWRSPLLLLVVVVELFSWADA) form the signal peptide. Helical transmembrane passes span 173 to 193 (WVMC…SPVL), 197 to 217 (ALWE…IQAL), 322 to 342 (FFAT…LVAM), 376 to 396 (FFYR…MWEI), 404 to 424 (LAFL…YAFV), 466 to 486 (FFYF…FIGF), 492 to 512 (KVQG…MVIL), 525 to 545 (IGVA…CQAF), and 555 to 575 (IGII…LGIF). A phosphoserine mark is found at serine 599 and serine 632. A disordered region spans residues 689-710 (RISENNNNAERRRKPLPNNAFR).

This sequence belongs to the transient receptor potential (TRP) ion channel family. Interacts with rho1.

The protein localises to the cell membrane. Its subcellular location is the golgi apparatus membrane. Acts as a key signaling component in the regulation of cell shape and cell wall synthesis through interaction with GTPase Rho1. This is TRP-like ion channel pkd2 (pkd2) from Schizosaccharomyces pombe (strain 972 / ATCC 24843) (Fission yeast).